Consider the following 596-residue polypeptide: Alkaline phosphatase 4 (596 aa).

Residues 1 to 20 (MHCLVILGFLLGSLVAFSWA) form the signal peptide. Aspartate 93 lines the Mg(2+) pocket. Aspartate 93 is a binding site for Zn(2+). Catalysis depends on serine 144, which acts as the Phosphoserine intermediate. Histidine 202 and threonine 204 together coordinate Mg(2+). Asparagine 262 and asparagine 297 each carry an N-linked (GlcNAc...) asparagine glycan. Glutamate 369 is a binding site for Mg(2+). Positions 374 and 378 each coordinate Zn(2+). Residue asparagine 401 is glycosylated (N-linked (GlcNAc...) asparagine). Aspartate 415 and histidine 416 together coordinate Zn(2+). 2 N-linked (GlcNAc...) asparagine glycosylation sites follow: asparagine 464 and asparagine 470. Zn(2+) is bound at residue histidine 504. Cysteine 539 and cysteine 550 form a disulfide bridge. Residues 548–566 (DSCEDHKDGQKDRPLDKPN) are compositionally biased toward basic and acidic residues. The disordered stretch occupies residues 548 to 570 (DSCEDHKDGQKDRPLDKPNPKRN). A lipid anchor (GPI-anchor amidated asparagine) is attached at asparagine 570. The chain crosses the membrane as a helical span at residues 571–591 (GATVVGASLIPILTAATAAIL). Positions 571–596 (GATVVGASLIPILTAATAAILRGRGL) are cleaved as a propeptide — removed in mature form.

Belongs to the alkaline phosphatase family. As to quaternary structure, homodimer. Requires Mg(2+) as cofactor. It depends on Zn(2+) as a cofactor. Ellipsoid body ring neurons in the adult brain and in the lower Malpighian tubule and ureter.

It is found in the cell membrane. The catalysed reaction is a phosphate monoester + H2O = an alcohol + phosphate. Its function is as follows. Important role in neural and renal epithelial function. This Drosophila melanogaster (Fruit fly) protein is Alkaline phosphatase 4.